The primary structure comprises 430 residues: MNVGKLQPVRGTRDLLPEECYKFWHIRDVAHDIGERYGFVPVETPIFEFQDVFLKTLGDSSDIIGKEMYSFPDRGGDVLVLRPELTAAVARMLICERLTLPARLFTFGPVFRYERPQKCRQRQFHQINYEHFGAGCTADAELMALAYDILGALNLRSEVQLEINSLGNQDSVLEYRNSLLKYFEKHEHALSEDSRRRLQTNPLRILDSKDRGDIAILCGAPVIADFYDDESKMTFNGVMQQLDNLGIPYTVNPRLVRGLDYYCGTVFEFKTTSLGSQDAVIAGGRYDKLVASMGGGDVPAVGFAGGVERLASLAAYSHSTRFSVAFLPLGEEAARCAMRSAYELRGRGIRVLCDGVVEKLKIGLKHADRSGVDLALILGDEEIAKGEVLCRHMDTGLQQTVSISNLGDYVSGMESNAQGNNRAALSSAGE.

It belongs to the class-II aminoacyl-tRNA synthetase family. In terms of assembly, homodimer.

The protein resides in the cytoplasm. It carries out the reaction tRNA(His) + L-histidine + ATP = L-histidyl-tRNA(His) + AMP + diphosphate + H(+). In Anaplasma marginale (strain Florida), this protein is Histidine--tRNA ligase.